The following is a 403-amino-acid chain: MSHRKFSAPRHGSLGFLPRKRSSRHRGKVKSFPKDDPSKPVHLTAFLGYKAGMTHIVREVDRPGSKVNKKEVVEAVTIVETPPMVVVGIVGYVETPRGLRTFKTVFAEHISDECKRRFYKNWHKSKKKAFTKYCKKWQDDAGKRQLDKDFSSMKKYCQVIRVLAHTQMRLLPLRQKKAHLMEIQVNGGTVAEKLDWARERLEQQVPVSQVFGQDEMIDVIGVTKGKGYKGVTSRWHTKKLPRKTHRGLRKVACIGAWHPARVAFSVARAGQKGYHHRTEINKKIYKIGQGYLIKDGKLIKNNASTDYDLSDKSINPLGGFVHYGEVTNDFVMLKGCVVGTKKRVLTLRKSLLVQTKRRALEKIDLKFIDTTSKFGHGRFQTVEEKKAFMGPLKKDRIAKEEGA.

Positions 1–37 are disordered; that stretch reads MSHRKFSAPRHGSLGFLPRKRSSRHRGKVKSFPKDDP. Phosphoserine is present on Ser-13. A compositionally biased stretch (basic residues) spans 18–31; it reads PRKRSSRHRGKVKS. Residue Lys-39 forms a Glycyl lysine isopeptide (Lys-Gly) (interchain with G-Cter in SUMO2) linkage. Position 136 is an N6-acetyllysine (Lys-136). Residues Lys-224 and Lys-226 each participate in a glycyl lysine isopeptide (Lys-Gly) (interchain with G-Cter in SUMO2) cross-link. His-245 is modified (tele-methylhistidine). N6-acetyllysine; alternate occurs at positions 286 and 294. A Glycyl lysine isopeptide (Lys-Gly) (interchain with G-Cter in SUMO2); alternate cross-link involves residue Lys-286. Lys-294 participates in a covalent cross-link: Glycyl lysine isopeptide (Lys-Gly) (interchain with G-Cter in SUMO1); alternate. A Phosphoserine modification is found at Ser-304. The residue at position 366 (Lys-366) is an N6-acetyllysine; alternate. Lys-366 participates in a covalent cross-link: Glycyl lysine isopeptide (Lys-Gly) (interchain with G-Cter in SUMO2); alternate. N6-acetyllysine is present on Lys-373. Residues Lys-386, Lys-393, and Lys-399 each participate in a glycyl lysine isopeptide (Lys-Gly) (interchain with G-Cter in SUMO2) cross-link.

This sequence belongs to the universal ribosomal protein uL3 family. In terms of assembly, component of the large ribosomal subunit. Interacts with DHX33. In terms of processing, constitutively monomethylated at His-245 by METTL18. Methylation at His-245 regulates translation elongation by slowing ribosome traversal on tyrosine codons: slower elongation provides enough time for proper folding of synthesized proteins and prevents cellular aggregation of tyrosine-rich proteins. It is not required for incorporation of RPL3 into ribosomes.

The protein resides in the nucleus. It localises to the nucleolus. The protein localises to the cytoplasm. Functionally, component of the large ribosomal subunit. The ribosome is a large ribonucleoprotein complex responsible for the synthesis of proteins in the cell. The protein is Large ribosomal subunit protein uL3 (RPL3) of Oryctolagus cuniculus (Rabbit).